The following is a 370-amino-acid chain: Cysteine-type anaerobic sulfatase-maturating enzyme (370 aa).

The Radical SAM core domain maps to 1–227 (MPPLSLLIKP…LKNLFDFWYE (227 aa)). Positions 15 and 19 each coordinate [4Fe-4S] cluster. Y21 contacts S-adenosyl-L-methionine. Residue C22 participates in [4Fe-4S] cluster binding. S-adenosyl-L-methionine contacts are provided by G66, S122, R134, and L195. The [4Fe-4S] cluster site is built by C255, C261, and C276. D277 serves as the catalytic Proton acceptor. C317, C320, C326, C330, and C348 together coordinate [4Fe-4S] cluster.

Belongs to the radical SAM superfamily. Anaerobic sulfatase-maturating enzyme family. As to quaternary structure, monomer. The cofactor is [4Fe-4S] cluster.

The enzyme catalyses L-cysteinyl-[sulfatase] + S-adenosyl-L-methionine + H2O = 3-oxo-L-alanyl-[sulfatase] + hydrogen sulfide + 5'-deoxyadenosine + L-methionine + 2 H(+). It functions in the pathway protein modification; sulfatase oxidation. In terms of biological role, involved in 'Cys-type' sulfatase maturation under anaerobic conditions. Catalyzes the post-translational modification of cysteine ('Cys-51' in the arylsulfatase CPF_0221) into 3-oxoalanine (also known as C(alpha)-formylglycine (FGly)), by a free radical chemical mechanism initiated via the reductive cleavage of S-adenosyl-L-methionine (SAM). Is also able to oxidize a serine residue in a synthetic substrate to FGly in vitro, and in a serine variant of a Cys-type sulfatase in vivo, but this activity is not physiological. Converts threonyl peptides to the corresponding ketone product, and also allo-threonyl peptides, but with a significantly reduced efficiency. This is Cysteine-type anaerobic sulfatase-maturating enzyme from Clostridium perfringens (strain ATCC 13124 / DSM 756 / JCM 1290 / NCIMB 6125 / NCTC 8237 / Type A).